We begin with the raw amino-acid sequence, 309 residues long: Cytochrome c biogenesis protein CcsA (309 aa).

Helical transmembrane passes span 18–38 (LGIL…GAVF), 43–63 (FFIV…QLLF), 67–87 (ISGH…AWGI), 102–122 (IIPS…CFVL), 148–168 (VMLS…VLFI), 216–236 (SILI…VWAN), 250–267 (TWAF…HMRI), and 279–299 (LATS…FLGI).

It belongs to the CcmF/CycK/Ccl1/NrfE/CcsA family. As to quaternary structure, may interact with ccs1.

The protein resides in the cellular thylakoid membrane. In terms of biological role, required during biogenesis of c-type cytochromes (cytochrome c6 and cytochrome f) at the step of heme attachment. In Prochlorococcus marinus (strain MIT 9312), this protein is Cytochrome c biogenesis protein CcsA.